Here is a 512-residue protein sequence, read N- to C-terminus: Maturase K (512 aa).

It belongs to the intron maturase 2 family. MatK subfamily.

It localises to the plastid. The protein localises to the chloroplast. Functionally, usually encoded in the trnK tRNA gene intron. Probably assists in splicing its own and other chloroplast group II introns. In Lilium regale (Regal lily), this protein is Maturase K.